The primary structure comprises 652 residues: Phosphomethylpyrimidine synthase (652 aa).

Substrate contacts are provided by residues asparagine 257, methionine 286, tyrosine 315, histidine 351, 371-373 (SRG), 412-415 (DGLR), and glutamate 451. Position 455 (histidine 455) interacts with Zn(2+). Tyrosine 478 provides a ligand contact to substrate. Histidine 519 lines the Zn(2+) pocket. Residues cysteine 599, cysteine 602, and cysteine 607 each coordinate [4Fe-4S] cluster.

The protein belongs to the ThiC family. Homodimer. It depends on [4Fe-4S] cluster as a cofactor.

It catalyses the reaction 5-amino-1-(5-phospho-beta-D-ribosyl)imidazole + S-adenosyl-L-methionine = 4-amino-2-methyl-5-(phosphooxymethyl)pyrimidine + CO + 5'-deoxyadenosine + formate + L-methionine + 3 H(+). The protein operates within cofactor biosynthesis; thiamine diphosphate biosynthesis. In terms of biological role, catalyzes the synthesis of the hydroxymethylpyrimidine phosphate (HMP-P) moiety of thiamine from aminoimidazole ribotide (AIR) in a radical S-adenosyl-L-methionine (SAM)-dependent reaction. The chain is Phosphomethylpyrimidine synthase from Thiobacillus denitrificans (strain ATCC 25259 / T1).